We begin with the raw amino-acid sequence, 631 residues long: Tumor protein p73 (631 aa).

A transactivation region spans residues 1–43 (MAQTSSSSSSTFEHLWSSLEPDSTYFDLPQPSQGTSEASGSEE). 2 disordered regions span residues 23–43 (STYF…GSEE) and 69–113 (SRAA…NTDY). A Phosphothreonine; by PLK1 modification is found at threonine 24. The residue at position 25 (tyrosine 25) is a Phosphotyrosine; by SRC and HCK. 2 stretches are compositionally biased toward polar residues: residues 30–43 (QPSQ…GSEE) and 86–100 (PTHS…TFDT). Tyrosine 91 is subject to Phosphotyrosine; by ABL1. The tract at residues 123–302 (FQQSSTAKSA…DRKADEDHYR (180 aa)) is DNA-binding. Residues cysteine 186, histidine 189, cysteine 250, and cysteine 254 each coordinate Zn(2+). Over residues 306–315 (ALNESTTKNG) the composition is skewed to polar residues. The segment at 306–334 (ALNESTTKNGAASKRAFKQSPPAIPALGT) is disordered. Residues 337 to 372 (KKRRHGDEDMFYMHVRGRENFEILMKVKESLELMEL) are interaction with HIPK2. Residues 337–378 (KKRRHGDEDMFYMHVRGRENFEILMKVKESLELMELVPQPLV) form an oligomerization region. Residues 477–481 (PPPPY) carry the PPxY motif motif. Positions 479 to 545 (PPYHADPSLV…WRGLQDLKQS (67 aa)) constitute an SAM domain. Lysine 622 is covalently cross-linked (Glycyl lysine isopeptide (Lys-Gly) (interchain with G-Cter in SUMO); alternate). Residue lysine 622 forms a Glycyl lysine isopeptide (Lys-Gly) (interchain with G-Cter in SUMO2); alternate linkage.

The protein belongs to the p53 family. As to quaternary structure, found in a complex with p53/TP53 and CABLES1. The C-terminal oligomerization domain binds to the ABL1 tyrosine kinase SH3 domain. Interacts with HECW2, HIPK2, RANBP9 and WWOX. Interacts (via SAM domain) with FBXO45 (via B30.2/SPRY domain). Interacts with YAP1 (phosphorylated form). Interacts with HCK (via SH3 domain); this inhibits TP73 activity and degradation. Interacts (via SAM domain) with NQO1; this interaction is NADH-dependent, stabilizes TP73 in response to oxidative stress and protects it from ubiquitin-independent degradation by the 20S proteasome. The cofactor is Zn(2+). Post-translationally, sumoylated on Lys-622, which potentiates proteasomal degradation but does not affect transcriptional activity. In terms of processing, phosphorylation by PLK1 and PLK3 inhibits the transcription regulator activity and pro-apoptotic function. Higher levels of phosphorylation seen in striatal neurons of. mutant huntingtin (htt) transgenic mice. Polyubiquitinated by RCHY1/PIRH2; leading to its degradation by the proteasome. In terms of tissue distribution, found in striatal neurons of mutant huntingtin (htt) transgenic mice (at protein level). Isoform 1 is expressed in the nasal epithelium, the vomeronasal organ, the hippocampus and the hypothalamus.

Its subcellular location is the nucleus. It localises to the cytoplasm. Its function is as follows. Participates in the apoptotic response to DNA damage. Isoforms containing the transactivation domain are pro-apoptotic, isoforms lacking the domain are anti-apoptotic and block the function of p53 and transactivating p73 isoforms. May be a tumor suppressor protein. Is an activator of FOXJ1 expression, essential for the positive regulation of lung ciliated cell differentiation. The polypeptide is Tumor protein p73 (Tp73) (Mus musculus (Mouse)).